We begin with the raw amino-acid sequence, 244 residues long: Gas vesicle protein F (244 aa).

The segment at 1-109 (MTVGLYLYGI…QLKELFAKLS (109 aa)) is N-terminus. The tract at residues 110 to 233 (GQREVSIKIF…GDRLRIRYNN (124 aa)) is C-terminus, modifed ferredoxin fold. The interval 234-244 (LTAPYTFAQLI) is C-tail.

The protein belongs to the gas vesicle GvpF/GvpL family. As to quaternary structure, binds GvpA.

It localises to the gas vesicle. Its function is as follows. A minor component of the gas vesicle, may be involved in preventing GvpA aggregation during gas vesicle nucleation. Gas vesicles (GV) are hollow, gas filled proteinaceous nanostructures. During planktonic growth they allow positioning of the organism at a favorable depth for light or nutrient acquisition. The protein is Gas vesicle protein F of Microcystis aeruginosa (strain PCC 7806).